The sequence spans 184 residues: MSNLDNIINEILEDAKKESEHILNDANQEKEKIIETKIDQANQEKDTILKKAESEAKGVYDRHLSQVVLKSRDNALFAKQEVIDSVLQKIKDKLKNMSLEDYKKYLTNSLSKMDLNSDDLLVLQSDKYDSLKNENFNVKLSDETVDSGFCIKRGNVLINNNFSSLVDSMKDELEVEIAKTLFKK.

This sequence belongs to the V-ATPase E subunit family.

Its function is as follows. Produces ATP from ADP in the presence of a proton gradient across the membrane. The chain is V-type proton ATPase subunit E from Finegoldia magna (strain ATCC 29328 / DSM 20472 / WAL 2508) (Peptostreptococcus magnus).